The following is a 290-amino-acid chain: Probable endonuclease 4 (290 aa).

Zn(2+) contacts are provided by His-66, His-106, Glu-143, Asp-179, His-182, His-216, Asp-229, His-231, and Glu-261.

This sequence belongs to the AP endonuclease 2 family. Zn(2+) serves as cofactor.

It carries out the reaction Endonucleolytic cleavage to 5'-phosphooligonucleotide end-products.. Functionally, endonuclease IV plays a role in DNA repair. It cleaves phosphodiester bonds at apurinic or apyrimidinic (AP) sites, generating a 3'-hydroxyl group and a 5'-terminal sugar phosphate. This chain is Probable endonuclease 4, found in Solibacter usitatus (strain Ellin6076).